The following is a 161-amino-acid chain: Vitamin K-dependent protein C (161 aa).

One can recognise a Peptidase S1 domain in the interval 1–161 (EKWELDLDIE…GCGLLHNYGV (161 aa)). An N-linked (GlcNAc...) asparagine glycan is attached at N17. Catalysis depends on D26, which acts as the Charge relay system. N-linked (GlcNAc...) asparagine glycosylation is present at N82. 2 disulfides stabilise this stretch: C100-C114 and C125-C153. The active-site Charge relay system is S129.

The protein belongs to the peptidase S1 family. In terms of tissue distribution, plasma; synthesized in the liver.

The protein resides in the secreted. It is found in the golgi apparatus. It localises to the endoplasmic reticulum. It carries out the reaction Degradation of blood coagulation factors Va and VIIIa.. Its function is as follows. Protein C is a vitamin K-dependent serine protease that regulates blood coagulation by inactivating factors Va and VIIIa in the presence of calcium ions and phospholipids. Exerts a protective effect on the endothelial cell barrier function. In Macaca mulatta (Rhesus macaque), this protein is Vitamin K-dependent protein C (PROC).